A 1014-amino-acid polypeptide reads, in one-letter code: Valine--tRNA ligase (1014 aa).

A 'HIGH' region motif is present at residues 49-59 (PNVTGSLHMGH). The 'KMSKS' region signature appears at 542–546 (KMSKS). K545 is an ATP binding site. A coiled-coil region spans residues 947 to 1014 (VVDIETLRAK…ILRLRLQTLV (68 aa)).

Belongs to the class-I aminoacyl-tRNA synthetase family. ValS type 1 subfamily. As to quaternary structure, monomer.

The protein localises to the cytoplasm. The enzyme catalyses tRNA(Val) + L-valine + ATP = L-valyl-tRNA(Val) + AMP + diphosphate. Functionally, catalyzes the attachment of valine to tRNA(Val). As ValRS can inadvertently accommodate and process structurally similar amino acids such as threonine, to avoid such errors, it has a 'posttransfer' editing activity that hydrolyzes mischarged Thr-tRNA(Val) in a tRNA-dependent manner. In Nostoc sp. (strain PCC 7120 / SAG 25.82 / UTEX 2576), this protein is Valine--tRNA ligase.